A 334-amino-acid chain; its full sequence is Trans-1,2-dihydrobenzene-1,2-diol dehydrogenase (334 aa).

This sequence belongs to the Gfo/Idh/MocA family. In terms of assembly, homodimer. Kidney.

The enzyme catalyses (1R,2R)-1,2-dihydrobenzene-1,2-diol + NADP(+) = catechol + NADPH + H(+). The catalysed reaction is D-xylose + NADP(+) = D-xylono-1,5-lactone + NADPH + H(+). The sequence is that of Trans-1,2-dihydrobenzene-1,2-diol dehydrogenase (DHDH) from Macaca fascicularis (Crab-eating macaque).